A 393-amino-acid polypeptide reads, in one-letter code: Formate-dependent phosphoribosylglycinamide formyltransferase (393 aa).

Residues 22–23 and E82 each bind N(1)-(5-phospho-beta-D-ribosyl)glycinamide; that span reads EL. ATP is bound by residues R114, K155, 160-165, 195-198, and E203; these read SSGKGQ and EGFI. The 190-residue stretch at 119–308 folds into the ATP-grasp domain; sequence RLAAEELDLP…QFALHARAIL (190 aa). Mg(2+)-binding residues include E267 and E279. Residues D286, K356, and 363-364 each bind N(1)-(5-phospho-beta-D-ribosyl)glycinamide; that span reads RR.

It belongs to the PurK/PurT family. As to quaternary structure, homodimer.

The catalysed reaction is N(1)-(5-phospho-beta-D-ribosyl)glycinamide + formate + ATP = N(2)-formyl-N(1)-(5-phospho-beta-D-ribosyl)glycinamide + ADP + phosphate + H(+). It participates in purine metabolism; IMP biosynthesis via de novo pathway; N(2)-formyl-N(1)-(5-phospho-D-ribosyl)glycinamide from N(1)-(5-phospho-D-ribosyl)glycinamide (formate route): step 1/1. Involved in the de novo purine biosynthesis. Catalyzes the transfer of formate to 5-phospho-ribosyl-glycinamide (GAR), producing 5-phospho-ribosyl-N-formylglycinamide (FGAR). Formate is provided by PurU via hydrolysis of 10-formyl-tetrahydrofolate. This chain is Formate-dependent phosphoribosylglycinamide formyltransferase, found in Pseudomonas fluorescens (strain Pf0-1).